Here is a 365-residue protein sequence, read N- to C-terminus: 7-methylxanthine methyltransferase PCS1 (365 aa).

Residue Tyr-19 coordinates S-adenosyl-L-homocysteine. Thr-26 lines the caffeine pocket. S-adenosyl-L-homocysteine is bound by residues Cys-62, Asn-67, Asp-99, Leu-100, Ser-134, and Phe-135. The caffeine site is built by Tyr-152, His-155, and Trp-156. Position 173 (Asn-173) interacts with Mg(2+). Residue His-221 coordinates caffeine. Residues Asp-259, Phe-261, and Asn-262 each coordinate Mg(2+). Phe-317 contributes to the caffeine binding site.

It belongs to the methyltransferase superfamily. Type-7 methyltransferase family. The cofactor is Mg(2+).

It catalyses the reaction 1,7-dimethylxanthine + S-adenosyl-L-methionine = caffeine + S-adenosyl-L-homocysteine + H(+). The enzyme catalyses 7-methylxanthine + S-adenosyl-L-methionine = theobromine + S-adenosyl-L-homocysteine + H(+). It functions in the pathway alkaloid biosynthesis. Its function is as follows. Involved in the biosynthesis of caffeine. Catalyzes the conversion of 7-methylxanthine (7mX) to theobromine, and, to some extent, the conversion of paraxanthine to caffeine, but seems not able to convert theobromine to caffeine. The polypeptide is 7-methylxanthine methyltransferase PCS1 (Camellia ptilophylla (Cocoa tea)).